A 420-amino-acid polypeptide reads, in one-letter code: Maturation protein A2 (420 aa).

RNA-binding stretches follow at residues 158–176, 226–236, and 294–298; these read IKYLGLLLRRLREGYRAVK, QNRHDKIQRLL, and PVSDW.

It belongs to the Leviviricetes maturation protein family. In terms of assembly, interacts with host MurA; this interaction inhibits the first step in host cell wall synthesis. Interacts with the capsid protein.

It localises to the virion. Functionally, induces host cell lysis. Inhibits host MurA activity thereby blocking the synthesis of murein precursors necessary for the host cell wall biosynthesis. May be responsible for the attachment to the host pilus. Makes extensive contacts with the viral genome. The sequence is that of Maturation protein A2 from Escherichia virus Qbeta (Bacteriophage Q-beta).